The chain runs to 707 residues: Drebrin (707 aa).

An N-acetylalanine modification is found at Ala-2. Residues 3–134 (GVSFSGHRLE…DAGAIGQRLS (132 aa)) form the ADF-H domain. Phosphoserine is present on residues Ser-141 and Ser-142. Over residues 209–236 (ERMEQERQEQEERERRYREREQQIEEHR) the composition is skewed to basic and acidic residues. Disordered regions lie at residues 209–438 (ERME…VCKE), 452–497 (AEEP…TSVA), 531–557 (WPGN…AEAS), 582–609 (LLNF…PLAA), and 630–707 (LEPE…EGGD). The residue at position 241 (Ser-241) is a Phosphoserine. Positions 288–298 (DNPREFFRQQE) are enriched in basic and acidic residues. The span at 329–343 (SDSGPSSSSSSSSSP) shows a compositional bias: low complexity. Position 342 is a phosphoserine (Ser-342). A compositionally biased stretch (polar residues) spans 355–364 (RTPNLSSSLP). Thr-377 and Thr-381 each carry phosphothreonine. A compositionally biased stretch (polar residues) spans 380-395 (PTRSPSDSSTASTPIT). Residues Ser-383, Ser-385, and Ser-391 each carry the phosphoserine modification. Position 392 is a phosphothreonine (Thr-392). Residues 409-420 (QPPPPPPPPPPA) show a composition bias toward pro residues. The span at 428 to 438 (PRLDGEEVCKE) shows a compositional bias: basic and acidic residues. Ser-467 is modified (phosphoserine). Thr-549 carries the post-translational modification Phosphothreonine. Polar residues predominate over residues 639-652 (NGETTQKEGTQQAS). Ser-659 is subject to Phosphoserine. The segment covering 695–707 (PVPEEEEGFEGGD) has biased composition (acidic residues).

In terms of assembly, interacts with RUFY. Interacts with CXCR4; this interaction is enhanced by antigenic stimulation. Interacts (via ADF-H domain) with ZMYND8 (via N-terminus); the interaction leads to sequestering of ZMYND8 in the cytoplasm. In terms of processing, ISGylated. In terms of tissue distribution, brain neurons.

It is found in the cytoplasm. The protein localises to the cell projection. The protein resides in the dendrite. Its subcellular location is the cell cortex. It localises to the cell junction. It is found in the growth cone. In terms of biological role, actin cytoskeleton-organizing protein that plays a role in the formation of cell projections. Required for actin polymerization at immunological synapses (IS) and for the recruitment of the chemokine receptor CXCR4 to IS. Plays a role in dendritic spine morphogenesis and organization, including the localization of the dopamine receptor DRD1 to the dendritic spines. Involved in memory-related synaptic plasticity in the hippocampus. The chain is Drebrin (Dbn1) from Rattus norvegicus (Rat).